A 529-amino-acid polypeptide reads, in one-letter code: Cytochrome P450 monooxygenase oblE (529 aa).

A helical transmembrane segment spans residues 38–58 (WQYIVTLLIAIITYDQVMYIW). C477 contributes to the heme binding site.

It belongs to the cytochrome P450 family. Heme is required as a cofactor.

It is found in the membrane. It functions in the pathway secondary metabolite biosynthesis; terpenoid biosynthesis. Cytochrome P450 monooxygenase; part of the gene cluster that mediates the biosynthesis of the sesterterpenes ophiobolins, fungal phytotoxins with potential anti-cancer activities. The first step of the pathway is performed by the sesterterpene synthase oblA that possesses both prenyl transferase and terpene cyclase activity, converting isopentenyl diphosphate and dimethylallyl diphosphate into geranylfarnesyl diphosphate (GFPP) and further converting GFPP into ophiobolin F, respectively. Other sesterterpenoids (C(25) terpenoids) are found as minor products of oblA. The cytochrome P450 monooxygenase oblB then catalyzes a four-step oxidative transformation of ophiobolin F to yield ophiobolin C. The function of the cytochrome P450 monooxygenase oblE has still to be determined. The chain is Cytochrome P450 monooxygenase oblE from Emericella variicolor (Aspergillus stellatus).